The sequence spans 523 residues: Ribonuclease Y (523 aa).

The chain crosses the membrane as a helical span at residues 3–23 (VWYAIGSIIFGLLVGVSVYLI). Positions 213-279 (LVNVINLPND…TKTIEKLVED (67 aa)) constitute a KH domain. The HD domain maps to 339-432 (ALGHSIEVAN…VCAADTLSAA (94 aa)).

The protein belongs to the RNase Y family.

The protein resides in the cell membrane. In terms of biological role, endoribonuclease that initiates mRNA decay. The protein is Ribonuclease Y of Helicobacter hepaticus (strain ATCC 51449 / 3B1).